We begin with the raw amino-acid sequence, 358 residues long: Alanine racemase (358 aa).

The active-site Proton acceptor; specific for D-alanine is Lys34. N6-(pyridoxal phosphate)lysine is present on Lys34. A substrate-binding site is contributed by Arg129. Residue Tyr254 is the Proton acceptor; specific for L-alanine of the active site. Met302 lines the substrate pocket.

Belongs to the alanine racemase family. Requires pyridoxal 5'-phosphate as cofactor.

The catalysed reaction is L-alanine = D-alanine. It functions in the pathway amino-acid biosynthesis; D-alanine biosynthesis; D-alanine from L-alanine: step 1/1. Catalyzes the interconversion of L-alanine and D-alanine. May also act on other amino acids. The sequence is that of Alanine racemase (alr) from Aliivibrio salmonicida (strain LFI1238) (Vibrio salmonicida (strain LFI1238)).